Reading from the N-terminus, the 125-residue chain is Ribonuclease P protein component (125 aa).

The protein belongs to the RnpA family. As to quaternary structure, consists of a catalytic RNA component (M1 or rnpB) and a protein subunit.

The enzyme catalyses Endonucleolytic cleavage of RNA, removing 5'-extranucleotides from tRNA precursor.. Functionally, RNaseP catalyzes the removal of the 5'-leader sequence from pre-tRNA to produce the mature 5'-terminus. It can also cleave other RNA substrates such as 4.5S RNA. The protein component plays an auxiliary but essential role in vivo by binding to the 5'-leader sequence and broadening the substrate specificity of the ribozyme. The chain is Ribonuclease P protein component from Rhodococcus opacus (strain B4).